Reading from the N-terminus, the 187-residue chain is UPF0301 protein Spro_4027 (187 aa).

This sequence belongs to the UPF0301 (AlgH) family.

The protein is UPF0301 protein Spro_4027 of Serratia proteamaculans (strain 568).